The following is a 238-amino-acid chain: Sugar fermentation stimulation protein homolog (238 aa).

This sequence belongs to the SfsA family.

In Haemophilus influenzae (strain 86-028NP), this protein is Sugar fermentation stimulation protein homolog.